The chain runs to 249 residues: 5'-nucleotidase SurE (249 aa).

A divalent metal cation-binding residues include aspartate 8, aspartate 9, serine 39, and asparagine 91.

It belongs to the SurE nucleotidase family. A divalent metal cation is required as a cofactor.

The protein resides in the cytoplasm. It catalyses the reaction a ribonucleoside 5'-phosphate + H2O = a ribonucleoside + phosphate. In terms of biological role, nucleotidase that shows phosphatase activity on nucleoside 5'-monophosphates. The polypeptide is 5'-nucleotidase SurE (Pseudomonas entomophila (strain L48)).